We begin with the raw amino-acid sequence, 462 residues long: EPD1-interacting receptor-like cytoplasmic serine/threonine-protein kinase 5A (462 aa).

The Protein kinase domain occupies 85 to 366 (FSSANFLGEG…DVVNILEPLL (282 aa)). ATP contacts are provided by residues 91 to 99 (LGEGGFGPV) and Lys120. Phosphotyrosine occurs at positions 165 and 167. Catalysis depends on Asp215, which acts as the Proton acceptor.

It belongs to the protein kinase superfamily. Ser/Thr protein kinase family. Interacts with the Verticillium dahliae elicitor EPD1 (AC G2WWH6). Phosphorylated at Tyr-165 and Tyr-167 in the presence of pathogen-associated molecular patterns (PAMPs); this triggers the expression of pathogenesis-related genes (e.g. PR5 and PR16). In terms of tissue distribution, mostly expressed in roots and, to a lesser extent, in leaves.

It localises to the cell membrane. The catalysed reaction is L-seryl-[protein] + ATP = O-phospho-L-seryl-[protein] + ADP + H(+). The enzyme catalyses L-threonyl-[protein] + ATP = O-phospho-L-threonyl-[protein] + ADP + H(+). Required for pathogen-associated molecular pattern (PAMP, e.g. chitin and flg22)-triggered immunity (PTI) involving reactive oxygen species (ROS) accumulation and triggering plant defense, including defense-related gene expression (e.g. PR1 and LOX). Ensures specific recognition of the EPD1 effector of Verticillium dahliae, resulting in a hypersensitive response known as effector-triggered immunity (ETI), characterized by the activation of programmed cell death to limit infection by the pathogen. Priming plants with the incompatible pathogen V.dahliae leads to an increased resistance to compatible pathogens, as a result of systemic acquired resistance (SAR). The protein is EPD1-interacting receptor-like cytoplasmic serine/threonine-protein kinase 5A of Gossypium barbadense (Sea Island cotton).